The sequence spans 184 residues: ATP synthase subunit b, chloroplastic (184 aa).

The helical transmembrane segment at 27-49 threads the bilayer; it reads LATNPINLSVVLGVLIFFGKGVL.

This sequence belongs to the ATPase B chain family. In terms of assembly, F-type ATPases have 2 components, F(1) - the catalytic core - and F(0) - the membrane proton channel. F(1) has five subunits: alpha(3), beta(3), gamma(1), delta(1), epsilon(1). F(0) has four main subunits: a(1), b(1), b'(1) and c(10-14). The alpha and beta chains form an alternating ring which encloses part of the gamma chain. F(1) is attached to F(0) by a central stalk formed by the gamma and epsilon chains, while a peripheral stalk is formed by the delta, b and b' chains.

The protein resides in the plastid. The protein localises to the chloroplast thylakoid membrane. F(1)F(0) ATP synthase produces ATP from ADP in the presence of a proton or sodium gradient. F-type ATPases consist of two structural domains, F(1) containing the extramembraneous catalytic core and F(0) containing the membrane proton channel, linked together by a central stalk and a peripheral stalk. During catalysis, ATP synthesis in the catalytic domain of F(1) is coupled via a rotary mechanism of the central stalk subunits to proton translocation. In terms of biological role, component of the F(0) channel, it forms part of the peripheral stalk, linking F(1) to F(0). This is ATP synthase subunit b, chloroplastic from Cucumis sativus (Cucumber).